The following is a 224-amino-acid chain: Proline/serine-rich protein C17A5.10 (224 aa).

Over residues Met1–Ser10 the composition is skewed to pro residues. The interval Met1–Tyr110 is disordered. A compositionally biased stretch (low complexity) spans Thr31–Ser52. 3 stretches are compositionally biased toward polar residues: residues Leu53–Ser68, Pro77–Tyr94, and Ser101–Tyr110.

The protein belongs to the HUA1 family.

Its subcellular location is the cytoplasm. Its function is as follows. May be involved in assembly and disassembly of the actin cytoskeleton. The sequence is that of Proline/serine-rich protein C17A5.10 from Schizosaccharomyces pombe (strain 972 / ATCC 24843) (Fission yeast).